We begin with the raw amino-acid sequence, 308 residues long: MKPLLCSLLLLSACAGPSEPQASGAGPAQTPPPVTVPMTPPSKKPALSAVQHWGVQLTGYGQTRLNAVHTSPFELVVVDPFDDDGTPWPAAEVRAAAQGRWLIAYLSMGAAESYRSYWQKGWKVGAPAWLLNEDPDWPGNFDVAYWDPAWQAIALAQLDRVIAQGFDGVYMDLIDAYQRHDNRPGARAEMVAWVCKIAAHARAQNPQFVIIPQNAAELIRDPGYAACVDASGNEETYVYAANRPTEAARQRELLASYRLWQQAGKPVFTIEYANQPALMKSAAERARAAGLIPYVGERSLDKLILNQP.

A disordered region spans residues 19-43; that stretch reads EPQASGAGPAQTPPPVTVPMTPPSK. The span at 29–43 shows a compositional bias: pro residues; that stretch reads QTPPPVTVPMTPPSK.

This is an uncharacterized protein from Deinococcus radiodurans (strain ATCC 13939 / DSM 20539 / JCM 16871 / CCUG 27074 / LMG 4051 / NBRC 15346 / NCIMB 9279 / VKM B-1422 / R1).